Reading from the N-terminus, the 1079-residue chain is Alpha-mannosidase C (1079 aa).

An N-terminal signal peptide occupies residues 1-22 (MFYKTFGFLFIYLIILISGTLS). Positions 44 and 46 each coordinate Zn(2+). Asn-60 and Asn-96 each carry an N-linked (GlcNAc...) asparagine glycan. Asp-158 serves as a coordination point for Zn(2+). The active-site Nucleophile is Asp-158. N-linked (GlcNAc...) asparagine glycans are attached at residues Asn-192, Asn-222, Asn-248, and Asn-467. Position 475 (His-475) interacts with Zn(2+). Asn-516, Asn-527, Asn-589, Asn-760, Asn-769, Asn-848, Asn-872, Asn-912, Asn-1040, and Asn-1057 each carry an N-linked (GlcNAc...) asparagine glycan.

Belongs to the glycosyl hydrolase 38 family. Zn(2+) serves as cofactor.

Its subcellular location is the secreted. It catalyses the reaction Hydrolysis of terminal, non-reducing alpha-D-mannose residues in alpha-D-mannosides.. This chain is Alpha-mannosidase C (manC), found in Dictyostelium discoideum (Social amoeba).